Here is a 469-residue protein sequence, read N- to C-terminus: Endoplasmic reticulum oxidoreductin-1 (469 aa).

Residues 1–36 (MGKGAIKEEESEKKRKTWRWPLATLVVVFLAVAVSS) form the signal peptide. 6 cysteine pairs are disulfide-bonded: C52/C71, C54/C69, C108/C372, C117/C122, C222/C231, and C375/C378. 3 residues coordinate FAD: R201, T203, and W214. Residues S242, H245, R275, and R282 each contribute to the FAD site. N-linked (GlcNAc...) asparagine glycosylation occurs at N365.

The protein belongs to the EROs family. May function both as a monomer and a homodimer. It depends on FAD as a cofactor. In terms of processing, N-glycosylated.

The protein resides in the endoplasmic reticulum membrane. In terms of biological role, essential oxidoreductase that oxidizes proteins in the endoplasmic reticulum to produce disulfide bonds. Acts by oxidizing directly PDI isomerase through a direct disulfide exchange. Does not act as a direct oxidant of folding substrate, but relies on PDI to transfer oxidizing equivalent. Does not oxidize all PDI related proteins, suggesting that it can discriminate between PDI and related proteins. Its reoxidation probably involves electron transfer to molecular oxygen via FAD. Acts independently of glutathione. May be responsible for a significant proportion of reactive oxygen species (ROS) in the cell, thereby being a source of oxidative stress. The sequence is that of Endoplasmic reticulum oxidoreductin-1 (AERO1) from Arabidopsis thaliana (Mouse-ear cress).